The chain runs to 363 residues: N-acetylmuramate/N-acetylglucosamine kinase (363 aa).

The protein belongs to the kinase AmgK family.

The catalysed reaction is N-acetyl-D-muramate + ATP = N-acetyl-alpha-D-muramate 1-phosphate + ADP + H(+). It carries out the reaction N-acetyl-D-glucosamine + ATP = N-acetyl-alpha-D-glucosamine 1-phosphate + ADP + H(+). Its pathway is cell wall biogenesis; peptidoglycan recycling. Its function is as follows. Sugar kinase that catalyzes the ATP-dependent phosphorylation of N-acetylmuramate (MurNAc) and N-acetylglucosamine (GlcNAc) at its C1 hydroxyl group, leading to MurNAc alpha-1P and GlcNAc alpha-1P, respectively. Is likely involved in peptidoglycan recycling as part of a cell wall recycling pathway that bypasses de novo biosynthesis of the peptidoglycan precursor UDP-MurNAc. Is able to complement the fosfomycin sensitivity phenotype of a P.putida mutant lacking amgK. The chain is N-acetylmuramate/N-acetylglucosamine kinase from Caulobacter vibrioides (strain ATCC 19089 / CIP 103742 / CB 15) (Caulobacter crescentus).